A 112-amino-acid chain; its full sequence is MKGTLLLLGLLVTGELSFQTTEACLPFFEGYASVLSGSRVWLYQELQAFNATAEEKVALEKIQDCFSEERIRNILLEPKIMEAMVASPECLSYYGLDNIRSILDYISKLLGE.

Residues 1–23 (MKGTLLLLGLLVTGELSFQTTEA) form the signal peptide. Residue N50 is glycosylated (N-linked (GlcNAc...) asparagine).

This sequence belongs to the secretoglobin family. Expressed in lacrimal gland, at higher level in males than females. Expressed in the submandibular gland.

Its subcellular location is the secreted. The polypeptide is Secretoglobin family 2B member 20 (Scgb2b20) (Mus musculus (Mouse)).